The following is a 271-amino-acid chain: uncharacterized protein (271 aa).

This is an uncharacterized protein from Azospirillum brasilense.